Reading from the N-terminus, the 219-residue chain is Factor in the germline alpha (219 aa).

Positions Glu-65–Leu-117 constitute a bHLH domain. The interval Ala-124–Gln-151 is disordered. Residues Ser-136 to Ser-148 are compositionally biased toward low complexity.

As to quaternary structure, heterodimer with TCF3/isoform E12. Germ cells. Expressed in the fetal ovary, but not by a range of other tissues. Expression increases across mid-gestation, rising some 40-fold by the time of primordial follicle formation.

The protein localises to the nucleus. Functionally, germline specific transcription factor implicated in postnatal oocyte-specific gene expression. Plays a key regulatory role in the expression of multiple oocyte-specific genes, including those that initiate folliculogenesis and those that encode the zona pellucida (ZP1, ZP2 and ZP3) required for fertilization and early embryonic survival. Essential for oocytes to survive and form primordial follicles. The persistence of FIGLA in adult females suggests that it may regulate additional pathways that are essential for normal ovarian development. Binds to the E-box (5'-CANNTG-3') of the ZPs (ZP1, ZP2, ZP3) promoters. This is Factor in the germline alpha (FIGLA) from Homo sapiens (Human).